Reading from the N-terminus, the 249-residue chain is Coproheme decarboxylase (249 aa).

Fe-coproporphyrin III is bound by residues arginine 131, 145-149 (YPMNK), histidine 172, and glutamine 185. Tyrosine 145 is a catalytic residue.

The protein belongs to the ChdC family. Type 1 subfamily. Fe-coproporphyrin III is required as a cofactor.

The catalysed reaction is Fe-coproporphyrin III + 2 H2O2 + 2 H(+) = heme b + 2 CO2 + 4 H2O. It carries out the reaction Fe-coproporphyrin III + H2O2 + H(+) = harderoheme III + CO2 + 2 H2O. The enzyme catalyses harderoheme III + H2O2 + H(+) = heme b + CO2 + 2 H2O. The protein operates within porphyrin-containing compound metabolism; protoheme biosynthesis. Involved in coproporphyrin-dependent heme b biosynthesis. Catalyzes the decarboxylation of Fe-coproporphyrin III (coproheme) to heme b (protoheme IX), the last step of the pathway. The reaction occurs in a stepwise manner with a three-propionate intermediate. The polypeptide is Coproheme decarboxylase (Staphylococcus carnosus (strain TM300)).